Here is a 224-residue protein sequence, read N- to C-terminus: N-terminal Xaa-Pro-Lys N-methyltransferase 1-A (224 aa).

Residues G70, R75, 92-94, 120-121, and Q136 contribute to the S-adenosyl-L-methionine site; these read DVT and LQ.

This sequence belongs to the methyltransferase superfamily. NTM1 family.

The protein resides in the nucleus. It catalyses the reaction N-terminal L-alanyl-L-prolyl-L-lysyl-[protein] + 3 S-adenosyl-L-methionine = N-terminal N,N,N-trimethyl-L-alanyl-L-prolyl-L-lysyl-[protein] + 3 S-adenosyl-L-homocysteine + 3 H(+). The enzyme catalyses N-terminal L-seryl-L-prolyl-L-lysyl-[protein] + 3 S-adenosyl-L-methionine = N-terminal N,N,N-trimethyl-L-seryl-L-prolyl-L-lysyl-[protein] + 3 S-adenosyl-L-homocysteine + 3 H(+). The catalysed reaction is N-terminal L-prolyl-L-prolyl-L-lysyl-[protein] + 2 S-adenosyl-L-methionine = N-terminal N,N-dimethyl-L-prolyl-L-prolyl-L-lysyl-[protein] + 2 S-adenosyl-L-homocysteine + 2 H(+). Its function is as follows. Distributive alpha-N-methyltransferase that methylates the N-terminus of target proteins containing the N-terminal motif [Ala/Gly/Pro/Ser]-Pro-Lys when the initiator Met is cleaved. Specifically catalyzes mono-, di- or tri-methylation of the exposed alpha-amino group of the Ala, Gly or Ser residue in the [Ala/Gly/Ser]-Pro-Lys motif and mono- or di-methylation of Pro in the Pro-Pro-Lys motif. Required during mitosis for normal bipolar spindle formation and chromosome segregation via its action on target proteins. This Xenopus laevis (African clawed frog) protein is N-terminal Xaa-Pro-Lys N-methyltransferase 1-A (ntmt1-a).